The following is a 246-amino-acid chain: MYLLIDVGNSRIKWLYGNKVPSTIEAVSYKQDWQMKLIRAWHLLPEPEAIALSSVNKAEITTTIEEIVRQLWHKTVKIFVSQKQTNHTLTVVYQKPEKLGSDRYLAMLGARSLCHDPLCVVGCGTAITLDAVDGDGRHLGGFILPGMRLAENALLQNTQKLVPMRWTPHLLGNDTASCISAGIHHALPAGVDHIIDELEGQCGYYFKRFAFGGDAQILFGNRPTYRIEPDLIFGGMFAHLSPPKQV.

Asp-6–Lys-13 contacts ATP. Substrate contacts are provided by residues Tyr-93 and Gly-100–Arg-103. Asp-102 acts as the Proton acceptor in catalysis. Residue Thr-125 coordinates ATP. Thr-175 provides a ligand contact to substrate.

Belongs to the type III pantothenate kinase family. In terms of assembly, homodimer. NH4(+) is required as a cofactor. The cofactor is K(+).

It localises to the cytoplasm. The catalysed reaction is (R)-pantothenate + ATP = (R)-4'-phosphopantothenate + ADP + H(+). The protein operates within cofactor biosynthesis; coenzyme A biosynthesis; CoA from (R)-pantothenate: step 1/5. In terms of biological role, catalyzes the phosphorylation of pantothenate (Pan), the first step in CoA biosynthesis. This chain is Type III pantothenate kinase, found in Dichelobacter nodosus (strain VCS1703A).